A 1000-amino-acid polypeptide reads, in one-letter code: SEC23-interacting protein (1000 aa).

An interaction with SEC23A region spans residues 1–367; sequence MAERKPNGGS…YTEEFSEKLE (367 aa). The disordered stretch occupies residues 133-252; it reads FSPSISKAQP…QQVPARPGAP (120 aa). Over residues 154–167 the composition is skewed to low complexity; sequence SYLPSQPSSLPPSY. A compositionally biased stretch (pro residues) spans 207 to 218; it reads PGPPAHPPPSGP. A compositionally biased stretch (low complexity) spans 235–246; sequence SSVQSPAQQQVP. Positions 644-707 constitute an SAM domain; the sequence is KEVLTLQETL…NFVEHKAAKL (64 aa). The tract at residues 716–748 is disordered; the sequence is AVAATSTKGQEQSAQKTKDMASLPSESNEPKRK. Phosphoserine occurs at positions 737 and 926. The region spanning 779–989 is the DDHD domain; the sequence is LDFEPEIFFA…ALLLLKEIYR (211 aa).

The protein belongs to the PA-PLA1 family. Interacts with SEC23A. Ubiquitously expressed with stronger levels detected in heart, liver and skeletal muscle.

It is found in the cytoplasmic vesicle. The protein localises to the COPII-coated vesicle membrane. Its subcellular location is the endoplasmic reticulum. Functionally, plays a role in the organization of endoplasmic reticulum exit sites. Specifically binds to phosphatidylinositol 3-phosphate (PI(3)P), phosphatidylinositol 4-phosphate (PI(4)P) and phosphatidylinositol 5-phosphate (PI(5)P). The chain is SEC23-interacting protein (SEC23IP) from Homo sapiens (Human).